A 506-amino-acid polypeptide reads, in one-letter code: Protein nucleotidyltransferase YdiU (506 aa).

ATP-binding residues include Gly-95, Gly-97, Arg-98, Lys-118, Asp-130, Gly-131, Arg-181, and Arg-188. Asp-257 functions as the Proton acceptor in the catalytic mechanism. Mg(2+) is bound by residues Asn-258 and Asp-267. ATP is bound at residue Asp-267. A disordered region spans residues 487 to 506 (KHYQDAPTPDQRVKQTFCGT).

Belongs to the SELO family. Mg(2+) is required as a cofactor. It depends on Mn(2+) as a cofactor.

It catalyses the reaction L-seryl-[protein] + ATP = 3-O-(5'-adenylyl)-L-seryl-[protein] + diphosphate. The catalysed reaction is L-threonyl-[protein] + ATP = 3-O-(5'-adenylyl)-L-threonyl-[protein] + diphosphate. The enzyme catalyses L-tyrosyl-[protein] + ATP = O-(5'-adenylyl)-L-tyrosyl-[protein] + diphosphate. It carries out the reaction L-histidyl-[protein] + UTP = N(tele)-(5'-uridylyl)-L-histidyl-[protein] + diphosphate. It catalyses the reaction L-seryl-[protein] + UTP = O-(5'-uridylyl)-L-seryl-[protein] + diphosphate. The catalysed reaction is L-tyrosyl-[protein] + UTP = O-(5'-uridylyl)-L-tyrosyl-[protein] + diphosphate. Functionally, nucleotidyltransferase involved in the post-translational modification of proteins. It can catalyze the addition of adenosine monophosphate (AMP) or uridine monophosphate (UMP) to a protein, resulting in modifications known as AMPylation and UMPylation. This Shewanella denitrificans (strain OS217 / ATCC BAA-1090 / DSM 15013) protein is Protein nucleotidyltransferase YdiU.